We begin with the raw amino-acid sequence, 330 residues long: tRNA U34 carboxymethyltransferase (330 aa).

Residues K91, W105, K110, G130, 152–154 (DPS), 181–182 (IE), M196, Y200, and R315 contribute to the carboxy-S-adenosyl-L-methionine site.

The protein belongs to the class I-like SAM-binding methyltransferase superfamily. CmoB family. In terms of assembly, homotetramer.

The enzyme catalyses carboxy-S-adenosyl-L-methionine + 5-hydroxyuridine(34) in tRNA = 5-carboxymethoxyuridine(34) in tRNA + S-adenosyl-L-homocysteine + H(+). In terms of biological role, catalyzes carboxymethyl transfer from carboxy-S-adenosyl-L-methionine (Cx-SAM) to 5-hydroxyuridine (ho5U) to form 5-carboxymethoxyuridine (cmo5U) at position 34 in tRNAs. In Shewanella sp. (strain ANA-3), this protein is tRNA U34 carboxymethyltransferase.